The chain runs to 165 residues: Small ribosomal subunit protein eS10 (165 aa).

A disordered region spans residues Ala92–Gln165. Positions Ser97–Arg128 are enriched in basic and acidic residues. Residues Ala142 to Arg153 show a composition bias toward low complexity. A compositionally biased stretch (gly residues) spans Gly154–Gln165.

The protein belongs to the eukaryotic ribosomal protein eS10 family. Component of the small ribosomal subunit.

Its subcellular location is the cytoplasm. The protein resides in the nucleus. It is found in the nucleolus. Functionally, component of the 40S ribosomal subunit. The ribosome is a large ribonucleoprotein complex responsible for the synthesis of proteins in the cell. This Xenopus laevis (African clawed frog) protein is Small ribosomal subunit protein eS10 (rps10).